The chain runs to 684 residues: Actin-related protein 5 (684 aa).

Residues 262–469 are a coiled coil; sequence KEKSVIIQLP…ARQKQKQKAN (208 aa). 2 disordered regions span residues 392–443 and 481–500; these read KEKK…PEHY and VNPTNHGNYGEKGEEVEDPE. Residues 402–443 show a composition bias toward basic and acidic residues; the sequence is SMKDGRLAQKRKRDEEKEKEKEKEEERDRQEEESFLKDPEHY.

It belongs to the actin family. ARP5 subfamily. In terms of assembly, component of the chromatin-remodeling Ino80 complex.

The protein localises to the nucleus. Proposed core component of the chromatin remodeling Ino80 complex which is involved in transcriptional regulation, DNA replication and probably DNA repair. The chain is Actin-related protein 5 (arpE) from Dictyostelium discoideum (Social amoeba).